The sequence spans 273 residues: 2,3,4,5-tetrahydropyridine-2,6-dicarboxylate N-succinyltransferase (273 aa).

2 residues coordinate substrate: Arg104 and Asp141.

This sequence belongs to the transferase hexapeptide repeat family. Homotrimer.

It is found in the cytoplasm. The catalysed reaction is (S)-2,3,4,5-tetrahydrodipicolinate + succinyl-CoA + H2O = (S)-2-succinylamino-6-oxoheptanedioate + CoA. Its pathway is amino-acid biosynthesis; L-lysine biosynthesis via DAP pathway; LL-2,6-diaminopimelate from (S)-tetrahydrodipicolinate (succinylase route): step 1/3. This Buchnera aphidicola subsp. Schizaphis graminum (strain Sg) protein is 2,3,4,5-tetrahydropyridine-2,6-dicarboxylate N-succinyltransferase.